Here is an 86-residue protein sequence, read N- to C-terminus: Cell division topological specificity factor (86 aa).

The protein belongs to the MinE family.

In terms of biological role, prevents the cell division inhibition by proteins MinC and MinD at internal division sites while permitting inhibition at polar sites. This ensures cell division at the proper site by restricting the formation of a division septum at the midpoint of the long axis of the cell. This is Cell division topological specificity factor from Rhizobium johnstonii (strain DSM 114642 / LMG 32736 / 3841) (Rhizobium leguminosarum bv. viciae).